Here is a 388-residue protein sequence, read N- to C-terminus: Chorismate synthase (388 aa).

Positions 39 and 45 each coordinate NADP(+). FMN contacts are provided by residues 130–132, 251–252, Gly296, 311–315, and Arg337; these read RSS, NA, and KPIPT.

The protein belongs to the chorismate synthase family. Homotetramer. FMNH2 is required as a cofactor.

It catalyses the reaction 5-O-(1-carboxyvinyl)-3-phosphoshikimate = chorismate + phosphate. Its pathway is metabolic intermediate biosynthesis; chorismate biosynthesis; chorismate from D-erythrose 4-phosphate and phosphoenolpyruvate: step 7/7. In terms of biological role, catalyzes the anti-1,4-elimination of the C-3 phosphate and the C-6 proR hydrogen from 5-enolpyruvylshikimate-3-phosphate (EPSP) to yield chorismate, which is the branch point compound that serves as the starting substrate for the three terminal pathways of aromatic amino acid biosynthesis. This reaction introduces a second double bond into the aromatic ring system. The polypeptide is Chorismate synthase (Streptococcus pyogenes serotype M3 (strain SSI-1)).